The sequence spans 198 residues: MGITHEFHIFLVDENVSLKSVSLLKGDSYGCNIHLKNSECKYITFILVLEPDWSEIAEAKPIRIRLNGKKMRTQLLTKTLMSIIYKAVIYVEENALVQFYSDTDRLYTDMYPTFLIDMDKQHYHILDNGYTYTYIDSFISECDKQRYLTSDIGENGYEDSTEEEDNEEDTDGVCLYCLEEEEEEDEDEDEDEDEDEEE.

A disordered region spans residues 153–198; sequence GENGYEDSTEEEDNEEDTDGVCLYCLEEEEEEDEDEDEDEDEDEEE. Composition is skewed to acidic residues over residues 156-171 and 178-198; these read GYED…EDTD and LEEE…DEEE.

It belongs to the poxviridae C7 protein family.

Its function is as follows. Plays a role for multiplication of the virus in different cell types. The chain is Probable host range protein 2-3 from Rabbit fibroma virus (strain Kasza) (RFV).